The following is a 250-amino-acid chain: Iron-sulfur assembly protein 1 (250 aa).

The disordered stretch occupies residues 54 to 89 (AADSVSPDSQRPGKKPFKFIVSNQSKSSKASKSPKW). Over residues 75–89 (SNQSKSSKASKSPKW) the composition is skewed to low complexity. Residues Cys178, Cys242, and Cys244 each coordinate Fe cation.

The protein belongs to the HesB/IscA family.

It is found in the mitochondrion matrix. Involved in the assembly of mitochondrial and cytoplasmic iron-sulfur proteins. Probably involved in the binding of an intermediate of Fe/S cluster assembly. The protein is Iron-sulfur assembly protein 1 (ISA1) of Saccharomyces cerevisiae (strain ATCC 204508 / S288c) (Baker's yeast).